The primary structure comprises 144 residues: Large ribosomal subunit protein uL14 (144 aa).

It belongs to the universal ribosomal protein uL14 family. Part of the 50S ribosomal subunit. Forms a cluster with proteins L3 and L24e, part of which may contact the 16S rRNA in 2 intersubunit bridges.

Functionally, binds to 23S rRNA. Forms part of two intersubunit bridges in the 70S ribosome. In Pyrobaculum aerophilum (strain ATCC 51768 / DSM 7523 / JCM 9630 / CIP 104966 / NBRC 100827 / IM2), this protein is Large ribosomal subunit protein uL14.